A 1196-amino-acid polypeptide reads, in one-letter code: Phosphatidylinositol-3,5-bisphosphate 3-phosphatase MTMR3 (1196 aa).

Serine 8 carries the phosphoserine modification. Residues 155–576 (EHVTSRFKNE…RNLMLWSAVY (422 aa)) enclose the Myotubularin phosphatase domain. Asparagine 326, asparagine 351, and isoleucine 352 together coordinate a 1,2-diacyl-sn-glycero-3-phospho-(1D-myo-inositol-3,5-bisphosphate). Positions 326, 351, and 352 each coordinate a 1,2-diacyl-sn-glycero-3-phospho-(1D-myo-inositol-3-phosphate). Catalysis depends on cysteine 413, which acts as the Phosphocysteine intermediate. The a 1,2-diacyl-sn-glycero-3-phospho-(1D-myo-inositol-3,5-bisphosphate) site is built by serine 414, aspartate 415, glycine 416, tryptophan 417, aspartate 418, arginine 419, lysine 455, and arginine 459. Residues serine 414, aspartate 415, glycine 416, tryptophan 417, aspartate 418, and arginine 419 each coordinate a 1,2-diacyl-sn-glycero-3-phospho-(1D-myo-inositol-3-phosphate). Residue arginine 459 participates in a 1,2-diacyl-sn-glycero-3-phospho-(1D-myo-inositol-3-phosphate) binding. A disordered region spans residues 587 to 612 (DDSCAPYPVPGTSPDEPPLSRLPKTR). Pro residues predominate over residues 593–603 (YPVPGTSPDEP). A phosphoserine mark is found at serine 613, serine 633, serine 647, and serine 651. Disordered regions lie at residues 697–719 (TKEE…EVKE) and 855–900 (ESGP…HRTS). Serine 907 is modified (phosphoserine). The span at 993–1008 (NSHSGRPSTTSSPDQP) shows a compositional bias: polar residues. Positions 993–1019 (NSHSGRPSTTSSPDQPSRSHLDDDGMP) are disordered. A coiled-coil region spans residues 1027–1060 (QRLRQIESGHQQEVETLKKQVQELKSRLESQYLT). Serine 1062 bears the Phosphoserine mark. An FYVE-type zinc finger spans residues 1117–1177 (DHLAAHCYAC…VCKSCYSSLH (61 aa)). Cysteine 1123, cysteine 1126, cysteine 1139, cysteine 1142, cysteine 1147, cysteine 1150, cysteine 1169, and cysteine 1172 together coordinate Zn(2+).

The protein belongs to the protein-tyrosine phosphatase family. Non-receptor class myotubularin subfamily. Forms heterodimers with MTMR4 that recruit both CEP55 and PLK1; occurs during early mitosis, regulates the phosphorylation of CEP55 by PLK1 and its recruitment to the midbody where it mediates cell abscission.

Its subcellular location is the cytoplasm. It is found in the cytosol. It localises to the membrane. It catalyses the reaction a 1,2-diacyl-sn-glycero-3-phospho-(1D-myo-inositol-3,5-bisphosphate) + H2O = a 1,2-diacyl-sn-glycero-3-phospho-(1D-myo-inositol-5-phosphate) + phosphate. It carries out the reaction a 1,2-diacyl-sn-glycero-3-phospho-(1D-myo-inositol-3-phosphate) + H2O = a 1,2-diacyl-sn-glycero-3-phospho-(1D-myo-inositol) + phosphate. The enzyme catalyses 1,2-dihexadecanoyl-sn-glycero-3-phospho-(1D-myo-inositol-3-phosphate) + H2O = 1,2-dihexadecanoyl-sn-glycero-3-phospho-(1D-myo-inositol) + phosphate. The catalysed reaction is 1,2-dioctanoyl-sn-glycero-3-phospho-(1-D-myo-inositol-3-phosphate) + H2O = 1,2-dioctanoyl-sn-glycero-3-phospho-(1D-myo-inositol) + phosphate. It catalyses the reaction 1,2-dihexadecanoyl-sn-glycero-3-phospho-(1D-myo-inositol-3,5-phosphate) + H2O = 1,2-dihexadecanoyl-sn-glycero-3-phospho-(1D-myo-inositol-5-phosphate) + phosphate. Lipid phosphatase that specifically dephosphorylates the D-3 position of phosphatidylinositol 3-phosphate and phosphatidylinositol 3,5-bisphosphate, generating phosphatidylinositol and phosphatidylinositol 5-phosphate. Decreases the levels of phosphatidylinositol 3-phosphate, a phospholipid found in cell membranes where it acts as key regulator of both cell signaling and intracellular membrane traffic. Could also have a molecular sequestering/adapter activity and regulate biological processes independently of its phosphatase activity. It includes the regulation of midbody abscission during mitotic cytokinesis. This is Phosphatidylinositol-3,5-bisphosphate 3-phosphatase MTMR3 from Mus musculus (Mouse).